Consider the following 1111-residue polypeptide: Lysylphosphatidylglycerol biosynthesis bifunctional protein LysX (1111 aa).

The tract at residues 1 to 612 is phosphatidylglycerol lysyltransferase; it reads MTLTSPPRTR…VLHHDGTAPD (612 aa). A run of 7 helical transmembrane segments spans residues 18 to 38, 60 to 80, 84 to 104, 118 to 138, 152 to 172, 209 to 229, and 308 to 328; these read VPAA…IASV, FPDT…ALAA, IAWW…VADL, VIGL…RPLF, GVLA…LELF, VNAL…IVLF, and AWLA…ASVG. Positions 613 to 1111 are lysine--tRNA ligase; it reads MSGLRTDTAD…TLPFPLARPR (499 aa). The segment at residues 674 to 747 is a DNA-binding region (OB); that stretch reads VAGRVLRIRD…GTRSLLVRHW (74 aa). 2 residues coordinate Mg(2+): Asp-1023 and Glu-1030.

This sequence in the N-terminal section; belongs to the LPG synthetase family. The protein in the C-terminal section; belongs to the class-II aminoacyl-tRNA synthetase family. Mg(2+) is required as a cofactor.

Its subcellular location is the cell membrane. The enzyme catalyses tRNA(Lys) + L-lysine + ATP = L-lysyl-tRNA(Lys) + AMP + diphosphate. It catalyses the reaction L-lysyl-tRNA(Lys) + a 1,2-diacyl-sn-glycero-3-phospho-(1'-sn-glycerol) = a 1,2-diacyl-sn-glycero-3-phospho-1'-(3'-O-L-lysyl)-sn-glycerol + tRNA(Lys). Catalyzes the production of L-lysyl-tRNA(Lys)transfer and the transfer of a lysyl group from L-lysyl-tRNA(Lys) to membrane-bound phosphatidylglycerol (PG), which produces lysylphosphatidylglycerol (LPG), one of the components of the bacterial membrane with a positive net charge. LPG synthesis contributes to the resistance to cationic antimicrobial peptides (CAMPs) and likely protects M.tuberculosis against the CAMPs produced by competiting microorganisms (bacteriocins). In fact, the modification of anionic phosphatidylglycerol with positively charged L-lysine results in repulsion of the peptides. This is Lysylphosphatidylglycerol biosynthesis bifunctional protein LysX (lysX) from Mycobacterium sp. (strain JLS).